The chain runs to 731 residues: MSNVVTRRGGSSIRVRLTVLCAKNLAKRDFFRLPDPFAKIVVDGSGQCHSTDTVKNTLDPKWNQHYDLYVGKMDSITISIWNHKKIHKKQGAGFLGCVRLLSNAISRLKDTGYQRLDLCKLNPTDNDAVRGQIVVSLQTRDRIGTLGSVVDCRGLLDNEGALLEDTGPGRPLSCFMDEPAPYTDGPGAAGGGPGRLVESPGQEQRLQAQRVRGPEVREHVQTPQNRSHGFQSQDLPEGYEQRTTVQGQVYFLHTQTGVSTWHDPRIPRDLNSVNCDDLGSLPAGWEVRTTVSGRIYFVDHNNRTTQFTDPRLHHIINHQSQLKEPNHAIPVQSDGSLEDGDEFPAQRYERDLVQKLKVLRHELSLLQPQAGHCRVEVSREEIFEESYRQIMKMRPKDLKKRLMVKFRGEEGLDYGGVAREWLYLLCHEMLNPYYGLFQYSTDNIYTLQINPDSSINPDHLSYFHFVGRIMGLAVFHGHYINGGFTVPFYKQLLGKPIQLSDLESVDPELHKSLVWILENDITSVLDHTFCVEHNAFGRLLQHELKPNGKNLQVTEENKKEYVRLYVNWRFMRGIEAQFLALQKGFNELIPQHLLKPFEQKELELIIGGLDKIDISDWKANTRLKHCLANSNIVQWFWQAVESFDEERRARLLQFVTGSTRVPLQGFKALQGSTGAAGPRLFTIHLIDANTDNLPKAHTCFNRIDIPPYESYEKLYEKLLTAVEETSGFAVE.

One can recognise a C2 domain in the interval 1–120 (MSNVVTRRGG…TGYQRLDLCK (120 aa)). The tract at residues 210 to 235 (RVRGPEVREHVQTPQNRSHGFQSQDL) is disordered. Positions 221–234 (QTPQNRSHGFQSQD) are enriched in polar residues. 2 WW domains span residues 233-266 (QDLPEGYEQRTTVQGQVYFLHTQTGVSTWHDPRI) and 279-312 (GSLPAGWEVRTTVSGRIYFVDHNNRTTQFTDPRL). The HECT domain occupies 394–731 (RPKDLKKRLM…VEETSGFAVE (338 aa)). Cys-699 acts as the Glycyl thioester intermediate in catalysis.

The protein localises to the cytoplasm. The protein resides in the cell membrane. It carries out the reaction S-ubiquitinyl-[E2 ubiquitin-conjugating enzyme]-L-cysteine + [acceptor protein]-L-lysine = [E2 ubiquitin-conjugating enzyme]-L-cysteine + N(6)-ubiquitinyl-[acceptor protein]-L-lysine.. It participates in protein modification; protein ubiquitination. Its function is as follows. E3 ubiquitin-protein ligase that acts as a negative regulator of BMP signaling pathway. Mediates ubiquitination and degradation of smad1 and smad5, 2 receptor-regulated SMADs specific for the BMP pathway. Promotes ubiquitination and subsequent proteasomal degradation of TRAF family members and rhoa. May play a role in dendrite formation by melanocytes. The protein is E3 ubiquitin-protein ligase SMURF1 (smurf1) of Xenopus laevis (African clawed frog).